The following is a 385-amino-acid chain: Probable splicing factor YJU2B (385 aa).

The tract at residues 1–26 is disordered; it reads MGERKGQNKYYPPDFNPEKHGSLNRY. Position 40 is a phosphoserine (Ser40). The stretch at 182-214 forms a coiled coil; that stretch reads LNSMLRRHFREKKKAMQEEEEKDQALQAKASLA. Residues 257–385 are disordered; sequence PSAQGPSASS…VADYSDSESE (129 aa). Over residues 258 to 271 the composition is skewed to low complexity; the sequence is SAQGPSASSSKASS. Ser306 carries the post-translational modification Phosphoserine. The span at 359–373 shows a compositional bias: polar residues; the sequence is GSSQEDLLNPNTPNA.

The protein belongs to the CWC16 family.

It is found in the nucleus. Functionally, may be involved in mRNA splicing. This chain is Probable splicing factor YJU2B (Yju2b), found in Mus musculus (Mouse).